Consider the following 141-residue polypeptide: MSFVSKLLYTVSALVLFHSGFSSYEFHHLLKLNSLNNAQGAISKLPKDIMYETYAGLILFVLAVFTSFEKLQYLPIESNDGKIISQGNYLKEIALNKATNVDNLIGSNPNGEIIFTPSFVDVHMKRKICREWASNTVKKEK.

The Cytoplasmic portion of the chain corresponds to 1 to 6; that stretch reads MSFVSK. Residues 7-27 form a helical membrane-spanning segment; it reads LLYTVSALVLFHSGFSSYEFH. Residues 28-48 lie on the Lumenal side of the membrane; that stretch reads HLLKLNSLNNAQGAISKLPKD. Residues 49-69 traverse the membrane as a helical segment; the sequence is IMYETYAGLILFVLAVFTSFE. At 70 to 141 the chain is on the cytoplasmic side; it reads KLQYLPIESN…WASNTVKKEK (72 aa).

Belongs to the membrane magnesium transporter (TC 1.A.67) family. As to quaternary structure, component of the ER membrane protein complex (EMC), which is composed of EMC1, EMC2, EMC3, EMC4, EMC5 and EMC6.

It localises to the endoplasmic reticulum membrane. Part of the endoplasmic reticulum membrane protein complex (EMC) that enables the energy-independent insertion into endoplasmic reticulum membranes of newly synthesized membrane proteins. Preferentially accommodates proteins with transmembrane domains that are weakly hydrophobic or contain destabilizing features such as charged and aromatic residues. Involved in the cotranslational insertion of multi-pass membrane proteins in which stop-transfer membrane-anchor sequences become ER membrane spanning helices. It is also required for the post-translational insertion of tail-anchored/TA proteins in endoplasmic reticulum membranes. By mediating the proper cotranslational insertion of N-terminal transmembrane domains in an N-exo topology, with translocated N-terminus in the lumen of the ER, controls the topology of multi-pass membrane proteins. This is ER membrane protein complex subunit 5 (EMC5) from Saccharomyces cerevisiae (strain ATCC 204508 / S288c) (Baker's yeast).